Here is an 846-residue protein sequence, read N- to C-terminus: Matrin-3 (846 aa).

Residue Ser-2 is modified to N-acetylserine. Position 3 is an N6-acetyllysine; alternate (Lys-3). Lys-3 participates in a covalent cross-link: Glycyl lysine isopeptide (Lys-Gly) (interchain with G-Cter in SUMO2); alternate. Phosphoserine is present on residues Ser-4, Ser-9, Ser-14, Ser-22, Ser-41, Ser-118, and Ser-126. Residues Lys-132 and Lys-146 each participate in a glycyl lysine isopeptide (Lys-Gly) (interchain with G-Cter in SUMO2) cross-link. 2 disordered regions span residues 147-174 (RRRT…YRVP) and 187-213 (DSFD…ESGY). A Phosphothreonine modification is found at Thr-150. Ser-157 bears the Phosphoserine mark. Tyr-158 is subject to Phosphotyrosine. Over residues 160-174 (RDGRSATREPPYRVP) the composition is skewed to basic and acidic residues. Ser-164, Ser-188, and Ser-195 each carry phosphoserine. Over residues 201-213 (DYDHGSRSQESGY) the composition is skewed to basic and acidic residues. Tyr-202 is subject to Phosphotyrosine. Phosphoserine is present on residues Ser-206, Ser-208, and Ser-211. Tyr-219 carries the phosphotyrosine modification. Ser-234 is subject to Phosphoserine. Lys-245 participates in a covalent cross-link: Glycyl lysine isopeptide (Lys-Gly) (interchain with G-Cter in SUMO2). Ser-264 bears the Phosphoserine mark. Residue Lys-269 forms a Glycyl lysine isopeptide (Lys-Gly) (interchain with G-Cter in SUMO2) linkage. At Ser-275 the chain carries Phosphoserine. The segment at 342 to 394 (PFMLQQSTNPAPGILGPPPPSFHLGGPAVGPRGNLGAGNGNLQGPRHMQKGRV) is disordered. The region spanning 398-473 (RVVHIMDFQR…KPVRVHLSQK (76 aa)) is the RRM 1 domain. Residues Lys-478, Lys-487, and Lys-491 each participate in a glycyl lysine isopeptide (Lys-Gly) (interchain with G-Cter in SUMO2) cross-link. In terms of domain architecture, RRM 2 spans 496–571 (RVIHLSNLPH…RCVKVDLSEK (76 aa)). Phosphoserine is present on residues Ser-509 and Ser-511. A Glycyl lysine isopeptide (Lys-Gly) (interchain with G-Cter in SUMO2) cross-link involves residue Lys-515. Lys-522 carries the N6-acetyllysine; alternate modification. Lys-522 participates in a covalent cross-link: Glycyl lysine isopeptide (Lys-Gly) (interchain with G-Cter in SUMO2); alternate. Residue Ser-533 is modified to Phosphoserine. Residues Lys-554 and Lys-555 each participate in a glycyl lysine isopeptide (Lys-Gly) (interchain with G-Cter in SUMO2) cross-link. Lys-571 carries the N6-acetyllysine modification. The interval 588 to 779 (KKDKSRKRSY…EDYTIPDEYR (192 aa)) is disordered. A phosphoserine mark is found at Ser-596, Ser-598, Ser-604, and Ser-606. Positions 600–642 (DGKESPSDKKSKTDAQKTESPAEGKEQEEKSGEDGEKDTKDDQ) are enriched in basic and acidic residues. Glycyl lysine isopeptide (Lys-Gly) (interchain with G-Cter in SUMO2) cross-links involve residues Lys-616 and Lys-629. A compositionally biased stretch (acidic residues) spans 652-664 (ESEDELLVDEEEA). A phosphoserine mark is found at Ser-653, Ser-670, Ser-672, and Ser-673. Positions 665 to 675 (AALLESGSSVG) are enriched in low complexity. Phosphothreonine is present on Thr-678. Residue Ser-688 is modified to Phosphoserine. The span at 688 to 703 (SDGKKEPSDKAVKKDP) shows a compositional bias: basic and acidic residues. The Nuclear localization signal signature appears at 709–717 (SKKKLKKVD). Residues Lys-718 and Lys-735 each participate in a glycyl lysine isopeptide (Lys-Gly) (interchain with G-Cter in SUMO2) cross-link. The residue at position 740 (Thr-740) is a Phosphothreonine. Phosphoserine is present on residues Ser-746 and Ser-758. Basic and acidic residues predominate over residues 766 to 779 (DENKEDYTIPDEYR). A Glycyl lysine isopeptide (Lys-Gly) (interchain with G-Cter in SUMO2) cross-link involves residue Lys-769. A Matrin-type zinc finger spans residues 800–831 (FYCKLCSLFYTNEEVAKNTHCSSLPHYQKLKK). Lys-835 bears the N6-acetyllysine; alternate mark. Lys-835 participates in a covalent cross-link: Glycyl lysine isopeptide (Lys-Gly) (interchain with G-Cter in SUMO2); alternate.

As to quaternary structure, part of a complex consisting of SFPQ, NONO and MATR3. Interacts with AGO1 and AGO2. Part of a complex composed at least of ASH2L, EMSY, HCFC1, HSPA8, CCAR2, MATR3, MKI67, RBBP5, TUBB2A, WDR5 and ZNF335; this complex may have a histone H3-specific methyltransferase activity. Interacts with TARDBP. Part of the HDP-RNP complex composed of at least HEXIM1, PRKDC, XRCC5, XRCC6, paraspeckle proteins (SFPQ, NONO, PSPC1, RBM14, and MATR3) and NEAT1 RNA. Interacts with FUS. Interacts with IGF2BP1. Interacts with IGF2BP2 and IGF2BP3. Interacts with RBPMS.

The protein resides in the nucleus matrix. May play a role in transcription or may interact with other nuclear matrix proteins to form the internal fibrogranular network. In association with the SFPQ-NONO heteromer may play a role in nuclear retention of defective RNAs. Plays a role in the regulation of DNA virus-mediated innate immune response by assembling into the HDP-RNP complex, a complex that serves as a platform for IRF3 phosphorylation and subsequent innate immune response activation through the cGAS-STING pathway. Binds to N6-methyladenosine (m6A)-containing mRNAs and contributes to MYC stability by binding to m6A-containing MYC mRNAs. May bind to specific miRNA hairpins. The polypeptide is Matrin-3 (Matr3) (Mus musculus (Mouse)).